Here is a 594-residue protein sequence, read N- to C-terminus: Elongation factor 4 (594 aa).

Positions 2–184 constitute a tr-type G domain; it reads KNIRNFSIIA…TIVAKVPAPE (183 aa). Residues 14-19 and 131-134 contribute to the GTP site; these read DHGKST and NKID.

This sequence belongs to the TRAFAC class translation factor GTPase superfamily. Classic translation factor GTPase family. LepA subfamily.

It localises to the cell inner membrane. The catalysed reaction is GTP + H2O = GDP + phosphate + H(+). Functionally, required for accurate and efficient protein synthesis under certain stress conditions. May act as a fidelity factor of the translation reaction, by catalyzing a one-codon backward translocation of tRNAs on improperly translocated ribosomes. Back-translocation proceeds from a post-translocation (POST) complex to a pre-translocation (PRE) complex, thus giving elongation factor G a second chance to translocate the tRNAs correctly. Binds to ribosomes in a GTP-dependent manner. The polypeptide is Elongation factor 4 (Francisella philomiragia subsp. philomiragia (strain ATCC 25017 / CCUG 19701 / FSC 153 / O#319-036)).